The sequence spans 184 residues: Lysozyme 1 (184 aa).

A signal peptide spans 1–20; it reads MNGLILFCAVVFATAVCTYG. The I-type lysozyme domain maps to 69–184; sequence TGMVSQQCLR…WRRVQAQGCN (116 aa). 6 disulfides stabilise this stretch: Cys76–Cys152, Cys81–Cys87, Cys92–Cys101, Cys114–Cys134, Cys124–Cys130, and Cys148–Cys166. The Proton donor role is filled by Glu84. Asp95 (nucleophile) is an active-site residue. 107 to 113 is a substrate binding site; sequence KRAYWID. Substrate contacts are provided by residues Tyr138 and 159–161; that span reads HNG.

Hemolymph, labial palps, non-vesiculated cells of mantle connective tissue, cells of interlamellar junctions and epithelia surrounding the water tubes of the gills.

It localises to the secreted. It catalyses the reaction Hydrolysis of (1-&gt;4)-beta-linkages between N-acetylmuramic acid and N-acetyl-D-glucosamine residues in a peptidoglycan and between N-acetyl-D-glucosamine residues in chitodextrins.. Functionally, has antibacterial activity against the Gram-positive bacteria L.garvieae, M.luteus and Enterococcus sp., and the Gram-negative bacteria E.coli and V.vulnificus. Weak antibacterial activity against the Gram-negative bacterium A.hydrophila. No antibacterial activity detected against the Gram-positive bacterium S.iniae or against the Gram-negative bacterium E.ictaluri. Shows some chitinase activity but no isopeptidase activity. The sequence is that of Lysozyme 1 from Crassostrea virginica (Eastern oyster).